The sequence spans 28 residues: Phospholipase A2 (28 aa).

Residue glycine 28 coordinates Ca(2+).

It depends on Ca(2+) as a cofactor. As to expression, expressed by the venom gland.

It is found in the secreted. It carries out the reaction a 1,2-diacyl-sn-glycero-3-phosphocholine + H2O = a 1-acyl-sn-glycero-3-phosphocholine + a fatty acid + H(+). PLA2 catalyzes the calcium-dependent hydrolysis of the 2-acyl groups in 3-sn-phosphoglycerides. The sequence is that of Phospholipase A2 from Scolopendra dehaani (Thai centipede).